Consider the following 812-residue polypeptide: Lon protease (812 aa).

The region spanning 22 to 215 (YAVLPLRDIV…KALSFMEAEI (194 aa)) is the Lon N-terminal domain. An ATP-binding site is contributed by 367–374 (GPPGVGKT). Residues 602 to 783 (EDQVGVVTGL…GEVLKHTLVR (182 aa)) form the Lon proteolytic domain. Residues Ser-689 and Lys-732 contribute to the active site. The disordered stretch occupies residues 787–812 (PIEWTEQENPTAVPPVEDEAGASLAH).

The protein belongs to the peptidase S16 family. Homohexamer. Organized in a ring with a central cavity.

The protein localises to the cytoplasm. It catalyses the reaction Hydrolysis of proteins in presence of ATP.. Its function is as follows. ATP-dependent serine protease that mediates the selective degradation of mutant and abnormal proteins as well as certain short-lived regulatory proteins. Required for cellular homeostasis and for survival from DNA damage and developmental changes induced by stress. Degrades polypeptides processively to yield small peptide fragments that are 5 to 10 amino acids long. Binds to DNA in a double-stranded, site-specific manner. The polypeptide is Lon protease (Brucella suis biovar 1 (strain 1330)).